The following is a 308-amino-acid chain: Putative hydrolase MT0526 (308 aa).

A disordered region spans residues 1 to 48; the sequence is MMVSSHLGSPDQAGHVDLASPADPPPPDASASHSPVDMPAPVAAAGSD. D62 (nucleophile) is an active-site residue. D62, D64, and D237 together coordinate Mg(2+). D64 acts as the Proton donor in catalysis.

This sequence belongs to the HAD-like hydrolase superfamily. SerB family. Mg(2+) is required as a cofactor.

The chain is Putative hydrolase MT0526 from Mycobacterium tuberculosis (strain CDC 1551 / Oshkosh).